The chain runs to 516 residues: Cytochrome P450 monooxygenase otaC (516 aa).

The helical transmembrane segment at 13–30 (FLWTAFAVGVVYCCTRMV) threads the bilayer. Position 454 (Cys454) interacts with heme.

It belongs to the cytochrome P450 family. Requires heme as cofactor.

The protein resides in the membrane. The catalysed reaction is 7-methylmellein + 3 reduced [NADPH--hemoprotein reductase] + 3 O2 = 7-carboxymellein + 3 oxidized [NADPH--hemoprotein reductase] + 4 H2O + 4 H(+). Its pathway is mycotoxin biosynthesis. Its function is as follows. Cytochrome P450 monooxygenase; part of the gene cluster that mediates the biosynthesis of ochratoxin A (OTA), a mycotoxin composed of a chlorinated type I polyketide dihydroisocoumarin moiety linked to L-phenylalanine, and demonstrated to have nephrotoxic, immunotoxic, genotoxic, neurotoxic, and teratogenic properties. OtaC catalyzes the oxidation of 7-methylmellein (7-MM) into 7-carboxymellein. The pathway begins with the highly reducing polyketide synthase otaA that catalyzes the formation of the isocoumarin group during the initial stages of biosynthesis, starting from one acetate and 4 malonate units, to originate the characteristic pentaketide skeleton 7-methylmellein (7-MM) of the OTA molecule. The newly identified cyclase otaY might be involved in the polyketide cyclization reaction during the initial steps of the OTA biosynthesis. 7-MM is then oxidized into 7-carboxymellein (also called ochratoxin beta) by the cytochrome P450 monooxygenase otaC. The NRPS encoded by the otaB gene is involved in the linking of phenylalanine to the dihydroisocoumarin ring. The reaction catalyzed by NRPS results in the production of ochratoxin B (OTB), which is the non-chlorinated analog of OTA and which subsequently serves as the substrate of the halogenase otaD for chlorination activity to form the final molecular structure of OTA, containing a chlorine atom in the C-5 position of the molecule. The polypeptide is Cytochrome P450 monooxygenase otaC (Aspergillus carbonarius (strain ITEM 5010)).